The primary structure comprises 2310 residues: MAKDKEKKGNLTGFLFGNVKESGELDVEENDQVFKDLKKDLELFAKSSQHISFKKTIGIDEDDKNAVTDSVIVPDKNALDYEDIDEVAEEIQSTENEINKLNADKLANAAIARLQQQHKEREEQQRLKLLEQQQRQLSKKERRKQRKQVGSKQPLQIKKKPSVDDFDFDEEEEQQQQKSTRSEDEDDDDISSASSLSSSSASSSASSSRSPSMSRSASDIESDSMSDSSRSSGSSISSRSSISSSSSRSDSDSDGGGGGGGGGGGSHRRRHKEKKPKKKVTMKAGSYEVVKSILETPEMFTPEDQEFKVFVSGKSSEGFILKFSQLFAPKFPDKPTRKKSRKTRFSTPQTLNDDSIETDELLLWNQPSKKQPPPSIIKKPITEIDSITKQLLKSNAGITSSTGGGGEEDTLTSSNTTTPTLTSMQLYQAAAEEDEEYVPEPLRETEDEEIMTMFYMVPDSNYHSLQQVNWEDNIIWDEESLIKFKKSDHFNQFYLSSDNQQQNIIIKEAITMPVEINDLTPNLNKNSKQTSSSSTTTSTTTTTSTTTTTTTTTTATTLSSTSTSTTTQRNNKNKNKNNNNNINNSSKLFGLDHISEKEEIMDTDSQNLLQQPLSQEKDKEKEKDKDKAQNEQHIQTIVNNKKNSTTNNNNLTNNNGNNNNTNNNNNNSNNNSNNNNNNNNNNKQNNNKEIDEIMKSNIDKWSLFPISNQELENGDWIDNIIWDESMVPEKIQQVSMLILDLNDREMYFEEHIEKKEHNNGESGSNGDQQAPVKKKSKKKLALEAAQAAQAAALERAQAAARAANGQTMSFEEQLQKDKEEDERKEREEREQSQREIDKFNLSNDKFYRPVRKPPPRPPNGSTKVVIQHSLPGIKLSLVKTHLTKEDLIYAHRPRILFPSNVPFRIIIYNKEGSLSGDLSSSSNNLLLNSSTNSIMGGHNMRGSINGGMMSSSSSSSSSSSKKSLHKSDLSARDGRLVLIEYTEQHPPLVSNVGMGLRIRNYYKKKNTHDTGPKDLNFEDGELVMLDNNEESPFLGDINPGQTIQSVVNNLFKVPIHKHNSANTDFLLVKSRDGKRWYIRDVGPIYAAGQILPEVEVPAPNSRNANMFLKSRLQAYIYRQFLKKSNPQRRLKITDICSAFPSQSETSIRKRLKDCADFQRGGDDSGWWTVKDNFTLPTEEEFQKLVTPEAVVSFESMLIGLQRLQDNGIIHFTAPGTIPTILGNLDDEDPIKKSIKPVEDELSITPWNLTGSFLSAMQGKGRLQIISDDPTGREDEYSYLKMPQKVVNQKQKAIKLALQKNQVTGTDADLRKLSLSASKTVLLELGVDEETINKLARWQRIDLVRKKSSEAALASNSNAAMTKFARGSRYSLDHQNLQYKEQCQLVFDNQIKAIAGKGDDLYDEDLDADLLKDLEDSLFGDSNQSQNQNQNQNQNQNQSNNNNNKSSSKSTGKRSRSLFSRDESDEEEDNEEEEYNKLMGTKNKDEESKAKAKAKAEEEEIKAKAEEAKAKAKAKAEEDDLTQGDRVFVKRTTLFQKPDGSLFKRIEIIRDPKVVQDYQKKKHDQFLQDRKKFGKQNEEDEETKKQRRRIQERLRRLKKNDQREDSFNMNSSNSSIGATIGSSNMINISAGNIPVSNINNNNYNNNNNNNNFSLNTSSSNKPIPPHRSSSSGIGSSGSNNNSNTDRDQTRISIVMPNQQANSDSNSSSSTKIRIGQSSSSSSSSSSSSGHPRSSDREHRSSEHRSGEHRSSEHRSSEHRGSEHRSSEHRSGEHSSHHRSSEHRSGDREHRSSDRGDREHRSSEHRSSEHRSSEHRSSEHRSGDKEHRSDREHRSSEHRSGDREHRSDREHREHRSGDREHRSDREHREHRSERSRNSSSGSSSSSRDHRDSHHRNSTGSSSDSHSSSHHSSSNRDSNHNGGSSSNNNNNNSNNNHNNNNNSNNNNNNNNNNNNNNNINNNNNNNNNINNINNNNNNNINNINNNYNNNNNNNNNNNNNNNNNNNNNNINNNENNNTNNLSNSTNQSPTLSQSGIIIRYNGSNSGNSNNTNGGNNRTEDQSVLNTPLSASSSGSNRKKRTLDQSNSESPSLSSTTLDGSDKSSRRNRVRKDGSGADVELSNIFERILDKLRTNDEFIAFRHKVTPKLAPDYHKVIKNPIDLTTMRDRNRHWEYKSKNQFIDAIKLMVANCFEYNEKRFSHLLPIAEKLLTSTLQLLAPFDSQIGDLEKSIEQTNLKQSSSSLLLSVDHTNGSTPSTPITLNTPITPNLPSNSPFFPPVDPPSKAHHSAEDEEIDIVSLYESGVSPSVKNNFN.

Positions 80 to 150 form a coiled coil; it reads DYEDIDEVAE…ERRKQRKQVG (71 aa). 11 disordered regions span residues 115-284, 330-352, 395-421, 521-587, 602-686, 755-778, 802-862, 937-968, 1417-1494, 1558-1616, and 1648-2111; these read QQQH…TMKA, KFPDKPTRKKSRKTRFSTPQTLN, NAGITSSTGGGGEEDTLTSSNTTTPTL, PNLN…NSSK, DTDS…KQNN, KEHNNGESGSNGDQQAPVKKKSKK, AANG…NGST, GHNMRGSINGGMMSSSSSSSSSSSKKSLHKSD, LFGD…AKAK, QKKK…SSIG, and NNNF…KDGS. Residues 117-129 are compositionally biased toward basic and acidic residues; the sequence is QHKEREEQQRLKL. A compositionally biased stretch (basic residues) spans 140 to 149; it reads KERRKQRKQV. Positions 164-174 are enriched in acidic residues; that stretch reads DDFDFDEEEEQ. Low complexity predominate over residues 191-248; the sequence is SSASSLSSSSASSSASSSRSPSMSRSASDIESDSMSDSSRSSGSSISSRSSISSSSSR. Residues 254–265 show a composition bias toward gly residues; it reads DGGGGGGGGGGG. Residues 266-281 are compositionally biased toward basic residues; the sequence is SHRRRHKEKKPKKKVT. Low complexity-rich tracts occupy residues 411 to 421 and 524 to 587; these read LTSSNTTTPTL and NKNS…NSSK. The span at 603 to 614 shows a compositional bias: polar residues; it reads TDSQNLLQQPLS. Positions 615 to 630 are enriched in basic and acidic residues; it reads QEKDKEKEKDKDKAQN. Residues 639 to 685 are compositionally biased toward low complexity; sequence NNKKNSTTNNNNLTNNNGNNNNTNNNNNNSNNNSNNNNNNNNNNKQN. A coiled-coil region spans residues 809 to 846; that stretch reads SFEEQLQKDKEEDERKEREEREQSQREIDKFNLSNDKF. Residues 813 to 838 show a composition bias toward basic and acidic residues; it reads QLQKDKEEDERKEREEREQSQREIDK. 2 stretches are compositionally biased toward low complexity: residues 950–961 and 1421–1449; these read SSSSSSSSSSSK and SNQSQNQNQNQNQNQNQSNNNNNKSSSKS. 2 coiled-coil regions span residues 1422–1522 and 1574–1604; these read NQSQ…DLTQ and KQNEEDEETKKQRRRIQERLRRLKKNDQRED. Residues 1462–1473 are compositionally biased toward acidic residues; that stretch reads ESDEEEDNEEEE. Composition is skewed to basic and acidic residues over residues 1481–1494, 1563–1576, and 1588–1605; these read KNKDEESKAKAKAK, DQFLQDRKKFGKQN, and RIQERLRRLKKNDQREDS. Polar residues predominate over residues 1606–1616; that stretch reads FNMNSSNSSIG. Composition is skewed to low complexity over residues 1648 to 1659, 1667 to 1682, and 1700 to 1730; these read NNNFSLNTSSSN, SSSSGIGSSGSNNNSN, and NSDSNSSSSTKIRIGQSSSSSSSSSSSSGHP. Composition is skewed to basic and acidic residues over residues 1731 to 1773 and 1780 to 1874; these read RSSD…GEHS and EHRS…ERSR. 2 stretches are compositionally biased toward low complexity: residues 1895 to 2023 and 2038 to 2053; these read STGS…NSTN and NGSNSGNSNNTNGGNN. Residues 1946-2004 adopt a coiled-coil conformation; that stretch reads NNNNNNNNNNINNNNNNNNNINNINNNNNNNINNINNNYNNNNNNNNNNNNNNNNNNNN. Positions 2058–2072 are enriched in polar residues; the sequence is QSVLNTPLSASSSGS. The segment covering 2082 to 2091 has biased composition (low complexity); it reads SNSESPSLSS. Residues 2096-2111 show a composition bias toward basic and acidic residues; sequence GSDKSSRRNRVRKDGS. The Bromo domain occupies 2123–2217; that stretch reads RILDKLRTND…TSTLQLLAPF (95 aa). Positions 2244 to 2289 are disordered; that stretch reads VDHTNGSTPSTPITLNTPITPNLPSNSPFFPPVDPPSKAHHSAEDE. The segment covering 2250–2271 has biased composition (low complexity); that stretch reads STPSTPITLNTPITPNLPSNSP.

It belongs to the TAF1 family.

The protein localises to the nucleus. Its function is as follows. May be a component of the TFIID basal transcription factor complex. The polypeptide is Transcription initiation factor TFIID subunit 1 (taf1) (Dictyostelium discoideum (Social amoeba)).